The chain runs to 213 residues: EEF1A lysine methyltransferase 1 (213 aa).

Belongs to the class I-like SAM-binding methyltransferase superfamily. EFM5 family.

It localises to the cytoplasm. The catalysed reaction is L-lysyl-[protein] + 3 S-adenosyl-L-methionine = N(6),N(6),N(6)-trimethyl-L-lysyl-[protein] + 3 S-adenosyl-L-homocysteine + 3 H(+). Its function is as follows. Protein-lysine methyltransferase that selectively catalyzes the trimethylation of EEF1A at 'Lys-79'. This is EEF1A lysine methyltransferase 1 from Gallus gallus (Chicken).